We begin with the raw amino-acid sequence, 425 residues long: Protein-glutamate methylesterase/protein-glutamine glutaminase (425 aa).

The region spanning 22-140 is the Response regulatory domain; it reads RVMVVDDSVV…EVAAADIFRH (119 aa). Asp-73 bears the 4-aspartylphosphate mark. Disordered regions lie at residues 150–174 and 203–223; these read AAKR…SNAS and VQRE…RPQP. The CheB-type methylesterase domain maps to 221–417; the sequence is PQPTLRSFSA…PLQQIAPKLV (197 aa). Active-site residues include Ser-241, His-269, and Asp-365.

This sequence belongs to the CheB family. Phosphorylated by CheA. Phosphorylation of the N-terminal regulatory domain activates the methylesterase activity.

The protein resides in the cytoplasm. It carries out the reaction [protein]-L-glutamate 5-O-methyl ester + H2O = L-glutamyl-[protein] + methanol + H(+). The catalysed reaction is L-glutaminyl-[protein] + H2O = L-glutamyl-[protein] + NH4(+). Its function is as follows. Involved in chemotaxis. Part of a chemotaxis signal transduction system that modulates chemotaxis in response to various stimuli. Catalyzes the demethylation of specific methylglutamate residues introduced into the chemoreceptors (methyl-accepting chemotaxis proteins or MCP) by CheR. Also mediates the irreversible deamidation of specific glutamine residues to glutamic acid. The sequence is that of Protein-glutamate methylesterase/protein-glutamine glutaminase from Nitrobacter winogradskyi (strain ATCC 25391 / DSM 10237 / CIP 104748 / NCIMB 11846 / Nb-255).